The primary structure comprises 158 residues: Nascent polypeptide-associated complex subunit beta (158 aa).

Disordered regions lie at residues 1–40 and 119–158; these read MDQAKLARLQQSVRIGKGKGTPRRKTKKVHKSSGTDDKKL and ESYQSMQKGEGGEDAKKDDDDDDDEIPDLVEGENFESKVE. Positions 16–31 are enriched in basic residues; that stretch reads GKGKGTPRRKTKKVHK. The NAC-A/B domain maps to 34–99; that stretch reads GTDDKKLQTS…GEDKELTELV (66 aa). Residues 137–152 show a composition bias toward acidic residues; that stretch reads DDDDDDEIPDLVEGEN.

Belongs to the NAC-beta family. In terms of assembly, part of the nascent polypeptide-associated complex (NAC), consisting of EGD2 and EGD1. NAC associates with ribosomes via EGD1.

Its subcellular location is the cytoplasm. The protein localises to the nucleus. Its function is as follows. Component of the nascent polypeptide-associated complex (NAC), a dynamic component of the ribosomal exit tunnel, protecting the emerging polypeptides from interaction with other cytoplasmic proteins to ensure appropriate nascent protein targeting. The NAC complex also promotes mitochondrial protein import by enhancing productive ribosome interactions with the outer mitochondrial membrane and blocks the inappropriate interaction of ribosomes translating non-secretory nascent polypeptides with translocation sites in the membrane of the endoplasmic reticulum. EGD1 may act as a transcription factor that exert a negative effect on the expression of several genes that are transcribed by RNA polymerase II. The polypeptide is Nascent polypeptide-associated complex subunit beta (EGD1) (Ajellomyces capsulatus (strain NAm1 / WU24) (Darling's disease fungus)).